The chain runs to 191 residues: Large ribosomal subunit protein eL15 (191 aa).

It belongs to the eukaryotic ribosomal protein eL15 family.

In Pyrobaculum aerophilum (strain ATCC 51768 / DSM 7523 / JCM 9630 / CIP 104966 / NBRC 100827 / IM2), this protein is Large ribosomal subunit protein eL15 (rpl15e).